Consider the following 506-residue polypeptide: Ubiquitin carboxyl-terminal hydrolase 22 (506 aa).

Residues 4–121 (AGCSHVNGFK…KEEQRKAWKL (118 aa)) form a UBP-type zinc finger. Zn(2+) contacts are provided by C6, H8, C46, C49, C59, C62, C67, H72, H76, H82, C95, and C98. The region spanning 159-501 (RGLINLGNTC…EGYLLFYHKQ (343 aa)) is the USP domain. The active-site Nucleophile is the C168. The active-site Proton acceptor is H460.

This sequence belongs to the peptidase C19 family. UBP8 subfamily. As to quaternary structure, component of some SAGA transcription coactivator-HAT complexes.

Its subcellular location is the nucleus. The enzyme catalyses Thiol-dependent hydrolysis of ester, thioester, amide, peptide and isopeptide bonds formed by the C-terminal Gly of ubiquitin (a 76-residue protein attached to proteins as an intracellular targeting signal).. Its function is as follows. Histone deubiquitinating component of the transcription regulatory histone acetylation (HAT) complex SAGA. Catalyzes the deubiquitination of both histones H2A and H2B, thereby acting as a coactivator. Recruited to specific gene promoters by activators, where it is required for transcription. The polypeptide is Ubiquitin carboxyl-terminal hydrolase 22 (usp22) (Danio rerio (Zebrafish)).